A 143-amino-acid chain; its full sequence is Large ribosomal subunit protein uL13 (143 aa).

It belongs to the universal ribosomal protein uL13 family. As to quaternary structure, part of the 50S ribosomal subunit.

In terms of biological role, this protein is one of the early assembly proteins of the 50S ribosomal subunit, although it is not seen to bind rRNA by itself. It is important during the early stages of 50S assembly. This is Large ribosomal subunit protein uL13 from Dichelobacter nodosus (strain VCS1703A).